A 620-amino-acid polypeptide reads, in one-letter code: Pentatricopeptide repeat-containing protein At5g66520 (620 aa).

10 PPR repeats span residues 79–113 (DTFL…SAPH), 114–148 (NAYT…GYEN), 149–179 (DVYA…IPEP), 180–210 (DDVS…MAEK), 211–245 (NAIS…DVEP), 246–280 (DNVS…RIRM), 281–311 (DSVL…IKKK), 312–346 (SVQA…GIKP), 347–382 (NVIT…NLKP), and 383–413 (TIEH…MPLK). The type E motif stretch occupies residues 418–493 (IWGALLKACR…VPGCSTISLE (76 aa)). The type E(+) motif stretch occupies residues 494–524 (GTTHEFLAGDRSHPEIEKIQSKWRIMRRKLE). Residues 525 to 620 (ENGYVPELEE…DGKCSCGDYW (96 aa)) are type DYW motif.

It belongs to the PPR family. PCMP-H subfamily.

The polypeptide is Pentatricopeptide repeat-containing protein At5g66520 (PCMP-H61) (Arabidopsis thaliana (Mouse-ear cress)).